Consider the following 297-residue polypeptide: Aspartate carbamoyltransferase catalytic subunit (297 aa).

The carbamoyl phosphate site is built by Arg49 and Thr50. Lys77 contributes to the L-aspartate binding site. Residues Arg99, His129, and Gln132 each coordinate carbamoyl phosphate. Arg162 and Arg215 together coordinate L-aspartate. 2 residues coordinate carbamoyl phosphate: Gly256 and Pro257.

The protein belongs to the aspartate/ornithine carbamoyltransferase superfamily. ATCase family. Heterododecamer (2C3:3R2) of six catalytic PyrB chains organized as two trimers (C3), and six regulatory PyrI chains organized as three dimers (R2).

The enzyme catalyses carbamoyl phosphate + L-aspartate = N-carbamoyl-L-aspartate + phosphate + H(+). It participates in pyrimidine metabolism; UMP biosynthesis via de novo pathway; (S)-dihydroorotate from bicarbonate: step 2/3. Functionally, catalyzes the condensation of carbamoyl phosphate and aspartate to form carbamoyl aspartate and inorganic phosphate, the committed step in the de novo pyrimidine nucleotide biosynthesis pathway. The protein is Aspartate carbamoyltransferase catalytic subunit of Legionella pneumophila (strain Paris).